The chain runs to 103 residues: Trp operon repressor homolog (103 aa).

Residues 62-85 mediate DNA binding; sequence QRKISELLGVGVATITRGSNELKH.

It belongs to the TrpR family. Homodimer.

It is found in the cytoplasm. Its function is as follows. This protein is an aporepressor. When complexed with L-tryptophan it binds the operator region of the trp operon and prevents the initiation of transcription. The polypeptide is Trp operon repressor homolog (Photobacterium profundum (strain SS9)).